We begin with the raw amino-acid sequence, 268 residues long: Mesoderm posterior protein 1 (268 aa).

Residues 17-93 (AAWGPTRRPP…RQSASEREKL (77 aa)) are disordered. Positions 36–48 (LVSSPDSWGSTPA) are enriched in polar residues. A compositionally biased stretch (low complexity) spans 66 to 86 (APSVGRRGARSSRLGSGQRQS). The bHLH domain occupies 82–136 (GQRQSASEREKLRMRTLARALHELRRFLPPSVAPAGQSLTKIETLRLAIRYIGHL). A CPLCP motif is present at residues 163–167 (CPLCP). 2 repeat units span residues 182–183 (GQ) and 184–185 (GQ). The interval 182-185 (GQGQ) is 2 X 2 AA tandem repeats of G-Q.

It is found in the nucleus. Functionally, transcription factor. Plays a role in the epithelialization of somitic mesoderm and in the development of cardiac mesoderm. Defines the rostrocaudal patterning of the somites by participating in distinct Notch pathways. This is Mesoderm posterior protein 1 (MESP1) from Homo sapiens (Human).